A 158-amino-acid chain; its full sequence is Eukaryotic translation initiation factor 5A-3 (158 aa).

Over residues 1 to 10 (MSDDEHHFES) the composition is skewed to basic and acidic residues. The tract at residues 1–23 (MSDDEHHFESSDAGASKTYPQQA) is disordered. At S2 the chain carries Phosphoserine. K51 bears the Hypusine mark.

The protein belongs to the eIF-5A family. In terms of processing, lys-52 undergoes hypusination, a unique post-translational modification that consists in the addition of a butylamino group from spermidine to lysine side chain, leading to the formation of the unusual amino acid hypusine. eIF-5As are the only known proteins to undergo this modification, which is essential for their function. As to expression, expressed in the vascular tissues of roots, stems and leaves. Localized in phloem companion cells rather than sieve-tube members. Not expressed in xylem or procambium. Detected in root tips and in the chalazal tissue of fertilized ovules.

Functionally, translation factor that promotes translation elongation and termination, particularly upon ribosome stalling at specific amino acid sequence contexts. Binds between the exit (E) and peptidyl (P) site of the ribosome and promotes rescue of stalled ribosome: specifically required for efficient translation of polyproline-containing peptides as well as other motifs that stall the ribosome. Acts as a ribosome quality control (RQC) cofactor by joining the RQC complex to facilitate peptidyl transfer during CAT tailing step. Involved in supporting growth and plays a regulatory role in the response to sub-lethal osmotic and nutrient stress. The sequence is that of Eukaryotic translation initiation factor 5A-3 (ELF5A-3) from Arabidopsis thaliana (Mouse-ear cress).